A 324-amino-acid chain; its full sequence is Protease HtpX homolog (324 aa).

2 consecutive transmembrane segments (helical) span residues 7-24 and 29-46; these read ALLL…GYLI and GALI…FTYW. Histidine 130 is a Zn(2+) binding site. The active site involves glutamate 131. Residue histidine 134 participates in Zn(2+) binding. 2 consecutive transmembrane segments (helical) span residues 145–165 and 172–192; these read ITAT…FFGG and GPGL…AMLV. Residue glutamate 201 coordinates Zn(2+). Over residues 288–305 the composition is skewed to polar residues; that stretch reads PASTFSRGAGTAASSGTP. The segment at 288–324 is disordered; the sequence is PASTFSRGAGTAASSGTPRGTGRSPWGGQPRGRGPWG.

This sequence belongs to the peptidase M48B family. It depends on Zn(2+) as a cofactor.

It localises to the cell inner membrane. This chain is Protease HtpX homolog, found in Rhodopseudomonas palustris (strain TIE-1).